Reading from the N-terminus, the 331-residue chain is Phosphate acyltransferase (331 aa).

This sequence belongs to the PlsX family. Homodimer. Probably interacts with PlsY.

The protein resides in the cytoplasm. It carries out the reaction a fatty acyl-[ACP] + phosphate = an acyl phosphate + holo-[ACP]. It participates in lipid metabolism; phospholipid metabolism. In terms of biological role, catalyzes the reversible formation of acyl-phosphate (acyl-PO(4)) from acyl-[acyl-carrier-protein] (acyl-ACP). This enzyme utilizes acyl-ACP as fatty acyl donor, but not acyl-CoA. The protein is Phosphate acyltransferase of Wolinella succinogenes (strain ATCC 29543 / DSM 1740 / CCUG 13145 / JCM 31913 / LMG 7466 / NCTC 11488 / FDC 602W) (Vibrio succinogenes).